The primary structure comprises 365 residues: Decapping nuclease RAI1 (365 aa).

Glu-165 provides a ligand contact to a divalent metal cation. Positions 197 and 214 each coordinate substrate. Residues Asp-216, Glu-234, and Leu-235 each coordinate a divalent metal cation. Substrate-binding residues include Lys-236 and Gln-260.

Belongs to the DXO/Dom3Z family. Interacts with rat1; the interaction is direct, stabilizes rat1 protein structure and stimulates its exoribonuclease activity. The interaction also stimulates rai1 pyrophosphohydrolase activity, probably by recruiting it to mRNA substrates. A divalent metal cation serves as cofactor.

Its subcellular location is the nucleus. It catalyses the reaction a 5'-end NAD(+)-phospho-ribonucleoside in mRNA + H2O = a 5'-end phospho-ribonucleoside in mRNA + NAD(+) + H(+). The enzyme catalyses a 5'-end (N(7)-methyl 5'-triphosphoguanosine)-ribonucleoside-ribonucleotide in mRNA + H2O = a (N(7)-methyl 5'-triphosphoguanosine)-nucleoside + a 5'-end phospho-ribonucleoside in mRNA + H(+). The catalysed reaction is a 5'-end triphospho-ribonucleoside in mRNA + H2O = a 5'-end phospho-ribonucleoside in mRNA + diphosphate + H(+). Functionally, decapping enzyme for NAD-capped RNAs: specifically hydrolyzes the nicotinamide adenine dinucleotide (NAD) cap from a subset of RNAs by removing the entire NAD moiety from the 5'-end of an NAD-capped RNA. The NAD-cap is present at the 5'-end of some RNAs and snoRNAs. In contrast to the canonical 5'-end N7 methylguanosine (m7G) cap, the NAD cap promotes mRNA decay. Also acts as a non-canonical decapping enzyme that removes the entire cap structure of m7G capped or incompletely capped RNAs. Has decapping activity toward incomplete 5'-end m7G cap mRNAs such as unmethylated 5'-end-capped RNA (cap0), while it has no activity toward 2'-O-ribose methylated m7G cap (cap1). Also possesses RNA 5'-pyrophosphohydrolase activity by hydrolyzing the 5'-end triphosphate to release pyrophosphates. Stimulates exoribonuclease activity of Rat1, allowing it to degrade RNAs with stable secondary structure more effectively. The chain is Decapping nuclease RAI1 (rai1) from Aspergillus fumigatus (strain ATCC MYA-4609 / CBS 101355 / FGSC A1100 / Af293) (Neosartorya fumigata).